Here is a 103-residue protein sequence, read N- to C-terminus: UPF0145 protein pXO2-45/BXB0052/GBAA_pXO2_0052 (103 aa).

It belongs to the UPF0145 family.

The sequence is that of UPF0145 protein pXO2-45/BXB0052/GBAA_pXO2_0052 from Bacillus anthracis.